We begin with the raw amino-acid sequence, 1077 residues long: Deoxyribonuclease CdiA (1077 aa).

The FHA-2 stretch occupies residues 67–384 (IGTSRQKTTD…DRDNYDAKQS (318 aa)). Residues 531 to 546 (QQNVDDLSRDTGNANG) show a composition bias toward polar residues. Residues 531 to 555 (QQNVDDLSRDTGNANGSIGPIFDKE) are disordered. The short motif at 781–784 (VENN) is the VENN CT cleavage motif element. Residues 954 to 1077 (MPWEDYVGKT…GVKVTVTQVK (124 aa)) are DNase activity.

Interacts with cognate immunity protein CdiI-YPIII, which blocks its toxic DNase activity. It depends on Zn(2+) as a cofactor.

It is found in the target cell. Its subcellular location is the target cell cytoplasm. In terms of biological role, toxic component of a toxin-immunity protein module, which functions as a cellular contact-dependent growth inhibition (CDI) system. CDI modules allow bacteria to communicate with and inhibit the growth of closely related neighboring bacteria in a contact-dependent fashion. The C-terminal 123 residues (954-1077) has DNase activity in the presence of Zn(2+), converting supercoiled DNA into open-circular form. Toxic activity is neutralized by coexpression of the cognate immunity protein CdiI-YPIII, but not by non-cognate immunity proteins from other toxin-immunity modules. Expression of the DNase domain as a chimera allows bacteria to attack other non-immune bacteria which become filamentous and have lost DNA staining. Its function is as follows. The CdiA protein is thought to be exported from the cell through the central lumen of CdiB, the other half of its two-partner system (TPS). The TPS domain probably remains associated with CdiB while the FHA-1 domain forms an extended filament with the receptor-binding domain (RBD) at its extremity; in the secretion arrested state the C-terminus of the RBD and YP domains form a hairpin-like structure as the FHA-2, PT and CT domains are periplasmic. The YP domain is probably responsible for this arrest at the point where it re-enters the host cell periplasm. Upon binding to a target cell outer membrane receptor a signal is transmitted to activate secretion. The filament elongates slightly, the rest of CdiA is secreted and the FHA-2 domain becomes stably associated with the target cell's outer membrane where it facilitates entry of the toxic CT domain into the target cell periplasm. From there the toxic CT domain is cleaved and gains access to the target cell cytoplasm via an inner membrane protein. The polypeptide is Deoxyribonuclease CdiA (Yersinia pseudotuberculosis serotype O:3 (strain YPIII)).